We begin with the raw amino-acid sequence, 267 residues long: Acetylglutamate kinase (267 aa).

Substrate-binding positions include 53 to 54, R75, and N167; that span reads GG.

This sequence belongs to the acetylglutamate kinase family. ArgB subfamily.

Its subcellular location is the cytoplasm. The enzyme catalyses N-acetyl-L-glutamate + ATP = N-acetyl-L-glutamyl 5-phosphate + ADP. The protein operates within amino-acid biosynthesis; L-arginine biosynthesis; N(2)-acetyl-L-ornithine from L-glutamate: step 2/4. Catalyzes the ATP-dependent phosphorylation of N-acetyl-L-glutamate. This chain is Acetylglutamate kinase, found in Shewanella pealeana (strain ATCC 700345 / ANG-SQ1).